We begin with the raw amino-acid sequence, 329 residues long: Acetyl-coenzyme A carboxylase carboxyl transferase subunit alpha (329 aa).

One can recognise a CoA carboxyltransferase C-terminal domain in the interval 40–294; sequence QLESLASRRR…RAALERHLGE (255 aa).

It belongs to the AccA family. Acetyl-CoA carboxylase is a heterohexamer composed of biotin carboxyl carrier protein (AccB), biotin carboxylase (AccC) and two subunits each of ACCase subunit alpha (AccA) and ACCase subunit beta (AccD).

It is found in the cytoplasm. It catalyses the reaction N(6)-carboxybiotinyl-L-lysyl-[protein] + acetyl-CoA = N(6)-biotinyl-L-lysyl-[protein] + malonyl-CoA. The protein operates within lipid metabolism; malonyl-CoA biosynthesis; malonyl-CoA from acetyl-CoA: step 1/1. Functionally, component of the acetyl coenzyme A carboxylase (ACC) complex. First, biotin carboxylase catalyzes the carboxylation of biotin on its carrier protein (BCCP) and then the CO(2) group is transferred by the carboxyltransferase to acetyl-CoA to form malonyl-CoA. The sequence is that of Acetyl-coenzyme A carboxylase carboxyl transferase subunit alpha from Synechococcus sp. (strain CC9902).